Consider the following 224-residue polypeptide: Charged multivesicular body protein 4b (224 aa).

The tract at residues 1 to 23 (MSVFGKLFGAGGGKAGKGGPTPQ) is disordered. Ser-2 carries the post-translational modification N-acetylserine. Lys-6 carries the post-translational modification N6-acetyllysine. Residues 8–19 (FGAGGGKAGKGG) show a composition bias toward gly residues. Positions 23 to 183 (QEAIQRLRDT…EELDKNLLEI (161 aa)) form a coiled coil. An N6-acetyllysine modification is found at Lys-114. Residues Ser-184 and Ser-223 each carry the phosphoserine modification. A disordered region spans residues 185 to 224 (GPETVPLPNVPSIALPSKPAKKKEEEDDDMKELENWAGSM).

This sequence belongs to the SNF7 family. In terms of assembly, probable core component of the endosomal sorting required for transport complex III (ESCRT-III). ESCRT-III components are thought to multimerize to form a flat lattice on the perimeter membrane of the endosome. Several assembly forms of ESCRT-III may exist that interact and act sequentially. Interacts with CHMP6 and CHMP4C. Interacts with PDCD6IP; the interaction is direct. Interacts with VPS4A; the interaction is direct. Interacts with VPS4B; the interaction is direct. Interacts with CHMP7. Interacts with CFTR; the interaction requires misfolded CFTR. Interacts with PTPN23. Interacts with CC2D1B. In terms of processing, ISGylated. Isgylation weakens its interaction with VPS4A. Widely expressed. Expressed at higher level in heart and skeletal muscle. Also expressed in brain, colon, thymus, spleen, kidney, liver, small intestine, placenta, lung and peripheral blood lymphocytes.

Its subcellular location is the cytoplasm. The protein localises to the cytosol. It localises to the late endosome membrane. The protein resides in the midbody. It is found in the nucleus envelope. Functionally, probable core component of the endosomal sorting required for transport complex III (ESCRT-III) which is involved in multivesicular bodies (MVBs) formation and sorting of endosomal cargo proteins into MVBs. MVBs contain intraluminal vesicles (ILVs) that are generated by invagination and scission from the limiting membrane of the endosome and mostly are delivered to lysosomes enabling degradation of membrane proteins, such as stimulated growth factor receptors, lysosomal enzymes and lipids. The MVB pathway appears to require the sequential function of ESCRT-O, -I,-II and -III complexes. ESCRT-III proteins mostly dissociate from the invaginating membrane before the ILV is released. The ESCRT machinery also functions in topologically equivalent membrane fission events, such as the terminal stages of cytokinesis. Together with SPAST, the ESCRT-III complex promotes nuclear envelope sealing and mitotic spindle disassembly during late anaphase. Plays a role in the endosomal sorting pathway. ESCRT-III proteins are believed to mediate the necessary vesicle extrusion and/or membrane fission activities, possibly in conjunction with the AAA ATPase VPS4. When overexpressed, membrane-assembled circular arrays of CHMP4B filaments can promote or stabilize negative curvature and outward budding. CHMP4A/B/C are required for the exosomal release of SDCBP, CD63 and syndecan. Majority of the protein exists in a folded closed conformation. Its function is as follows. (Microbial infection) The ESCRT machinery also functions in topologically equivalent membrane fission events, such as the budding of enveloped viruses (HIV-1 and other lentiviruses). Via its interaction with PDCD6IP involved in HIV-1 p6- and p9-dependent virus release. This Homo sapiens (Human) protein is Charged multivesicular body protein 4b (CHMP4B).